Consider the following 100-residue polypeptide: Urease subunit gamma (100 aa).

The protein belongs to the urease gamma subunit family. In terms of assembly, heterotrimer of UreA (gamma), UreB (beta) and UreC (alpha) subunits. Three heterotrimers associate to form the active enzyme.

The protein localises to the cytoplasm. The catalysed reaction is urea + 2 H2O + H(+) = hydrogencarbonate + 2 NH4(+). The protein operates within nitrogen metabolism; urea degradation; CO(2) and NH(3) from urea (urease route): step 1/1. This is Urease subunit gamma from Methylocella silvestris (strain DSM 15510 / CIP 108128 / LMG 27833 / NCIMB 13906 / BL2).